Consider the following 104-residue polypeptide: UPF0145 protein TM1040_1243 (104 aa).

The protein belongs to the UPF0145 family.

The polypeptide is UPF0145 protein TM1040_1243 (Ruegeria sp. (strain TM1040) (Silicibacter sp.)).